The following is a 360-amino-acid chain: Aminomethyltransferase (360 aa).

This sequence belongs to the GcvT family. In terms of assembly, the glycine cleavage system is composed of four proteins: P, T, L and H.

The catalysed reaction is N(6)-[(R)-S(8)-aminomethyldihydrolipoyl]-L-lysyl-[protein] + (6S)-5,6,7,8-tetrahydrofolate = N(6)-[(R)-dihydrolipoyl]-L-lysyl-[protein] + (6R)-5,10-methylene-5,6,7,8-tetrahydrofolate + NH4(+). The glycine cleavage system catalyzes the degradation of glycine. In Pseudomonas aeruginosa (strain ATCC 15692 / DSM 22644 / CIP 104116 / JCM 14847 / LMG 12228 / 1C / PRS 101 / PAO1), this protein is Aminomethyltransferase.